Here is a 397-residue protein sequence, read N- to C-terminus: Ethanolaminephosphotransferase 1 (397 aa).

Position 2 is an N-acetylalanine (A2). The next 10 membrane-spanning stretches (helical) occupy residues 47–69, 84–103, 123–145, 150–172, 179–201, 221–243, 256–278, 291–310, 317–339, and 344–366; these read WLAPNLITFSGFLLVVFNFLLMA, HVPDWVWIVVGILNFVAYTL, LFDHGLDNWSYVYFVVTVYSIFG, GVSVFVLYLLLWVVLFSFILSHW, ILFLPWGYDISQVTISFVYIVTA, LFTAMIIGCALCVTLPMSLLNFF, VYEAMVPLFSPCLLFILSTAWIL, VFYFMVGTAFANSTCQLIVC, CPTLNWLLVPLFLVVLVVNLGVA, and SILLYTLTTAFTLAHIHYGVRVV. Residue U387 is a non-standard amino acid, selenocysteine.

Belongs to the CDP-alcohol phosphatidyltransferase class-I family. Mg(2+) is required as a cofactor. Requires Mn(2+) as cofactor.

The protein localises to the endoplasmic reticulum membrane. It carries out the reaction CDP-ethanolamine + a 1,2-diacyl-sn-glycerol = a 1,2-diacyl-sn-glycero-3-phosphoethanolamine + CMP + H(+). It catalyses the reaction 1-O-alkyl-2-acyl-sn-glycerol + CDP-ethanolamine = a 1-O-alkyl-2-acyl-sn-glycero-3-phosphoethanolamine + CMP + H(+). Its pathway is phospholipid metabolism; phosphatidylethanolamine biosynthesis; phosphatidylethanolamine from ethanolamine: step 3/3. Ethanolaminephosphotransferase that catalyzes the transfer of phosphoethanolamine (PE) from CDP-ethanolamine to lipid acceptors, the final step in the synthesis of PE via the 'Kennedy' pathway. PE is the second most abundant phospholipid of membranes in mammals and is involved in various membrane-related cellular processes. The enzyme is critical for the synthesis of several PE species and also catalyzes the synthesis of plasmanyl-PE, a lipid required for proper myelination and neurodevelopment, from 1-alkyl-2-acylglycerol. The sequence is that of Ethanolaminephosphotransferase 1 from Pongo abelii (Sumatran orangutan).